Here is a 154-residue protein sequence, read N- to C-terminus: Pro-corazonin (154 aa).

An N-terminal signal peptide occupies residues 1–19 (MLRLLLLPLFLFTLSMCMG). Q20 carries the post-translational modification Pyrrolidone carboxylic acid. Asparagine amide is present on N30. A propeptide spanning residues 70–154 (LERCLSQLQR…SAEPNVFGKH (85 aa)) is cleaved from the precursor.

It belongs to the corazonin family. In terms of tissue distribution, expression is restricted to 24 neurons in the larval CNS (8 in the brain and 16 in the ventral nerve cord) and 12-16 neurons in the pars lateralis of the adult brain.

It is found in the secreted. In terms of biological role, cardioactive peptide. Corazonin is probably involved in the physiological regulation of the heart beat. Clock (Clk) and cycle (cyc) proteins negatively regulate Crz transcription in a cell-specific manner. This is Pro-corazonin (Crz) from Drosophila simulans (Fruit fly).